Reading from the N-terminus, the 428-residue chain is Elongation factor 1-alpha (428 aa).

The 221-residue stretch at 5–225 folds into the tr-type G domain; it reads KPILNVAFIG…DAFQPPEKPT (221 aa). A G1 region spans residues 14–21; sequence GHVDAGKS. Residue 14–21 coordinates GTP; sequence GHVDAGKS. A Mg(2+)-binding site is contributed by Ser21. The interval 70–74 is G2; that stretch reads GVTID. The G3 stretch occupies residues 91-94; the sequence is DCPG. Residues 91–95 and 149–152 each bind GTP; these read DCPGH and NKMD. The tract at residues 149 to 152 is G4; the sequence is NKMD. The interval 189-191 is G5; it reads ASL.

It belongs to the TRAFAC class translation factor GTPase superfamily. Classic translation factor GTPase family. EF-Tu/EF-1A subfamily.

The protein resides in the cytoplasm. The enzyme catalyses GTP + H2O = GDP + phosphate + H(+). GTP hydrolase that promotes the GTP-dependent binding of aminoacyl-tRNA to the A-site of ribosomes during protein biosynthesis. The chain is Elongation factor 1-alpha from Methanococcus maripaludis (strain C7 / ATCC BAA-1331).